The primary structure comprises 316 residues: Melanocyte-stimulating hormone receptor (316 aa).

Topologically, residues 1-37 (MPMQGAQRKLLGSLNSTPTATSNLGLAANHTGAPCLE) are extracellular. N29 carries an N-linked (GlcNAc...) asparagine glycan. A helical membrane pass occupies residues 38–63 (VSIPDGLFLSLGLVSLVENVLVVAAI). Residues 64-72 (AKNRNLHSS) lie on the Cytoplasmic side of the membrane. The helical transmembrane segment at 73-93 (MYCFICCLALSDLLVSGSNML) threads the bilayer. Over 94–118 (ETAVILLLETGALATRTSVVQQLHN) the chain is Extracellular. A helical membrane pass occupies residues 119–140 (TINVLTCSSMLCSLCFLGAIAV). Topologically, residues 141–163 (DRYISIFYALRYHSIMTLPRAQR) are cytoplasmic. The helical transmembrane segment at 164 to 183 (AIAAIWVASVLSSTLFITYY) threads the bilayer. Topologically, residues 184 to 191 (DHAAVLLC) are extracellular. The helical transmembrane segment at 192-211 (LVVFFLAMLVLMAVLYVHML) threads the bilayer. The Cytoplasmic segment spans residues 212–240 (ARACQHAHGIIRLHKRQTPAHQAFGLRGA). A helical transmembrane segment spans residues 241-266 (ATLTILLGIFFLCWGPFFLHLTLVVF). Residues 267–279 (CPQHLTCSCIFKN) lie on the Extracellular side of the membrane. The helical transmembrane segment at 280 to 300 (FKVFLTLIICNTIIDPLIYAF) threads the bilayer. At 301 to 316 (RSQELRRTLKEVLCSW) the chain is on the cytoplasmic side. Residue C314 is the site of S-palmitoyl cysteine attachment.

It belongs to the G-protein coupled receptor 1 family. In terms of assembly, interacts with MGRN1, but does not undergo MGRN1-mediated ubiquitination; this interaction competes with GNAS-binding and thus inhibits agonist-induced cAMP production. Interacts with OPN3; the interaction results in a decrease in MC1R-mediated cAMP signaling and ultimately a decrease in melanin production in melanocytes.

It localises to the cell membrane. In terms of biological role, receptor for MSH (alpha, beta and gamma) and ACTH. The activity of this receptor is mediated by G proteins which activate adenylate cyclase. Mediates melanogenesis, the production of eumelanin (black/brown) and phaeomelanin (red/yellow), via regulation of cAMP signaling in melanocytes. In Saguinus geoffroyi (Geoffroy's tamarin), this protein is Melanocyte-stimulating hormone receptor (MC1R).